Reading from the N-terminus, the 440-residue chain is Doublesex- and mab-3-related transcription factor A2 (440 aa).

A DNA-binding region (DM) is located at residues 59–106; the sequence is CARCRNHGVVSALKGHKRYCRWKDCMCAKCTLIAERQRVMAAQVALRR. The interval 167 to 261 is disordered; the sequence is PKTPLPGTVT…SPSSAASRQM (95 aa). Over residues 199 to 213 the composition is skewed to basic and acidic residues; it reads DMRHGSGSENGDRES. Positions 229 to 241 are enriched in low complexity; the sequence is TPGSISPIGSDSG. A compositionally biased stretch (polar residues) spans 251–261; the sequence is PSPSSAASRQM. Residues 261–296 form the DMA domain; it reads MNAIDILTRVFPNHKRSVLELVLQGCGKNVVQAIEQ.

This sequence belongs to the DMRT family. As to expression, restrictively expressed in brain and developing germ cells, especially in spermatogonia, spermatocytes, spermatids, and sperm cells, and in developing oocytes, including early perinucleolus stage oocyte, late yolk vesicle stage oocyte, and oil drop stage oocyte.

It is found in the nucleus. Its function is as follows. May be involved in sexual development. This Danio rerio (Zebrafish) protein is Doublesex- and mab-3-related transcription factor A2 (dmrta2).